Reading from the N-terminus, the 387-residue chain is 3-ketoacyl-CoA thiolase (387 aa).

The Acyl-thioester intermediate role is filled by cysteine 91. Residues histidine 343 and cysteine 373 each act as proton acceptor in the active site.

The protein belongs to the thiolase-like superfamily. Thiolase family. Heterotetramer of two alpha chains (FadB) and two beta chains (FadA).

It is found in the cytoplasm. It carries out the reaction an acyl-CoA + acetyl-CoA = a 3-oxoacyl-CoA + CoA. The protein operates within lipid metabolism; fatty acid beta-oxidation. Its function is as follows. Catalyzes the final step of fatty acid oxidation in which acetyl-CoA is released and the CoA ester of a fatty acid two carbons shorter is formed. This is 3-ketoacyl-CoA thiolase from Escherichia coli O1:K1 / APEC.